The following is a 917-amino-acid chain: Lipoxygenase 6, chloroplastic (917 aa).

A chloroplast-targeting transit peptide spans 1-40 (MFVASPVKTNFNGVSLVKSPAFSALSCRKQHRVPISRQVR). Residues 46–57 (EEKAVDQEDGKK) show a composition bias toward basic and acidic residues. The interval 46-66 (EEKAVDQEDGKKSTNKPLINS) is disordered. The PLAT domain maps to 98 to 216 (ERFEHQLELF…DNPQARIIFR (119 aa)). In terms of domain architecture, Lipoxygenase spans 219–917 (PCLPSETPDG…GRGIPNSISI (699 aa)). 4 residues coordinate Fe cation: histidine 575, histidine 580, histidine 767, and asparagine 771. The disordered stretch occupies residues 880-904 (KDKKLKNRTGAGMPPYELLLPTSPH). Isoleucine 917 provides a ligand contact to Fe cation.

Belongs to the lipoxygenase family. Fe cation serves as cofactor.

The protein localises to the plastid. The protein resides in the chloroplast. The enzyme catalyses (9Z,12Z)-octadecadienoate + O2 = (13S)-hydroperoxy-(9Z,11E)-octadecadienoate. The catalysed reaction is (9Z,12Z,15Z)-octadecatrienoate + O2 = (13S)-hydroperoxy-(9Z,11E,15Z)-octadecatrienoate. Its pathway is lipid metabolism; oxylipin biosynthesis. In terms of biological role, plant lipoxygenases may be involved in a number of diverse aspects of plant physiology including growth and development, pest resistance, and senescence or responses to wounding. Catalyzes the hydroperoxidation of lipids containing a cis,cis-1,4-pentadiene structure. 13S-lipoxygenase that can use linolenic acid as substrates. In Arabidopsis thaliana (Mouse-ear cress), this protein is Lipoxygenase 6, chloroplastic.